Reading from the N-terminus, the 114-residue chain is uncharacterized protein (114 aa).

The region spanning 2–97 (ESEPLYKLKA…VARKVLARVL (96 aa)) is the HTH arsR-type domain. A DNA-binding region (H-T-H motif) is located at residues 37-60 (GELLSSDVGLESSNLSQQLGVLRR).

This is an uncharacterized protein from Mycobacterium tuberculosis (strain CDC 1551 / Oshkosh).